The primary structure comprises 187 residues: MTDSSNEHETENPSVPNPDNEIQDLQQEIATLKAELKEKNDKYLMVLAESENARKRMQKERQEMMQYAVENALIDFLVPIESMEKALGFASQMSDEVKNWALGFNMILQQFKQVFEEKGIVEYSSVGQKFNPFLHEAVETEETTKVPEGIIVEEFAKGYKIGDRPIRVAKVKVAKSPAPQEKEEEKK.

Positions 1-11 are enriched in basic and acidic residues; that stretch reads MTDSSNEHETE. A disordered region spans residues 1–23; it reads MTDSSNEHETENPSVPNPDNEIQ.

The protein belongs to the GrpE family. In terms of assembly, homodimer.

The protein localises to the cytoplasm. Functionally, participates actively in the response to hyperosmotic and heat shock by preventing the aggregation of stress-denatured proteins, in association with DnaK and GrpE. It is the nucleotide exchange factor for DnaK and may function as a thermosensor. Unfolded proteins bind initially to DnaJ; upon interaction with the DnaJ-bound protein, DnaK hydrolyzes its bound ATP, resulting in the formation of a stable complex. GrpE releases ADP from DnaK; ATP binding to DnaK triggers the release of the substrate protein, thus completing the reaction cycle. Several rounds of ATP-dependent interactions between DnaJ, DnaK and GrpE are required for fully efficient folding. The chain is Protein GrpE from Chlamydia felis (strain Fe/C-56) (Chlamydophila felis).